A 199-amino-acid chain; its full sequence is Pathogenesis-related 5 protein Cup a 3 (199 aa).

Intrachain disulfides connect Cys-9–Cys-198, Cys-50–Cys-60, Cys-65–Cys-71, Cys-113–Cys-187, Cys-118–Cys-171, Cys-126–Cys-136, Cys-140–Cys-149, and Cys-150–Cys-158.

The protein belongs to the thaumatin family. As to expression, expressed in pollen.

Its subcellular location is the secreted. The protein resides in the extracellular space. It is found in the extracellular matrix. The protein localises to the pollen coat. It localises to the cytoplasm. Its subcellular location is the nucleus. The protein resides in the mitochondrion. It is found in the endoplasmic reticulum. The protein localises to the golgi apparatus. It localises to the golgi stack. Its subcellular location is the vesicle. The protein resides in the vacuole. The sequence is that of Pathogenesis-related 5 protein Cup a 3 from Hesperocyparis arizonica (Arizona cypress).